We begin with the raw amino-acid sequence, 369 residues long: Trans-enoyl reductase pyiC (369 aa).

52–55 provides a ligand contact to NADP(+); that stretch reads CDYK. 137–144 serves as a coordination point for substrate; that stretch reads TGIGTLGM. Residues 195–198, tyrosine 213, and 260–261 each bind NADP(+); these read SPKN and LE. 280–284 is a substrate binding site; that stretch reads GPLLL. 349–350 provides a ligand contact to NADP(+); the sequence is VS.

The protein belongs to the zinc-containing alcohol dehydrogenase family. Monomer.

It functions in the pathway mycotoxin biosynthesis. Functionally, trans-enoyl reductase; part of the gene cluster that mediates the biosynthesis of the mycotoxin pyrichalasin H, a tyrosine-derived cytochalasan that inhibits the growth of rice seedlings, but also inhibits lymphocyte capping and actin polymerization and alters cell morphology. Pyrichalasin H is indicated as the responsible agent for the genus-specific pathogenicity of M.grisea toward crabgrass. The first step in the pathway is catalyzed by the O-methyltransferase pyiA which methylates free tyrosine to generate the precursor O-methyltyrosine. The hybrid PKS-NRPS pyiS, assisted by the enoyl reductase pyiC, are responsible for fusion of the O-methyltyrosine precursor and the polyketide backbone. The polyketide synthase module (PKS) of pyiS is responsible for the synthesis of the polyketide backbone and the downstream nonribosomal peptide synthetase (NRPS) amidates the carboxyl end of the polyketide with the O-methyltyrosine precursor. As the NRPS A-domain demonstrates substrate tolerance, pyiS can also use phenylalanine, tyrosine and even para-chlorophenylalanine as amino acid precursor, which leads to the production of novel cytochalasans, including halogenated cytochalasans. Because pyiS lacks a designated enoylreductase (ER) domain, the required activity is provided the enoyl reductase pyiC. Reduction by the hydrolyase pyiE, followed by dehydration and intra-molecular Diels-Alder cyclization by the Diels-Alderase pyiF then yield the required isoindolone-fused macrocycle. The tailoring cytochrome P450 monooxygenases piyD and piyG catalyze the hydroxylation at C-18 and C-7, respectivily, whereas the short-chain dehydrogenase/reductase pyiH reduces the carbonyl at C-21 in preparation for the transfer of an acetyl group by the acetyltransferase pyiB. These 3 reactions whose order is not clear yet, lead to the production of O-methylpyrichalasin J, a deacetylated pyrichalasin H. Finally, pyiB to converts O-methylpyrichalasin J into the final product pyrichalasin H via acetylation of C-21. This chain is Trans-enoyl reductase pyiC, found in Pyricularia grisea (Crabgrass-specific blast fungus).